The chain runs to 377 residues: MANTSVRRRQLLSSVLLLQWLTTVLGVAWGPNPIDGSKHGQFPSLRRTEGVSQSGSGHKGSVYRIPLADMTFWSWMSYLKELPDIDESRNPILKRLLSGSFLRRDGSTTVNVRVPARELVRLLSLTPEQQREGVSAKVRLINLLDPKYSVYEPYLYREILPKRSPLLLPSLGEYRGAFLTYIFHPLSKGLVGDMLETGRSHPDVQVLAANMVAALKSLHNLGLLHRSIELNSFSVLPDGTVVLGGLDTAAPIGTETRLWVGFFGQETAPEIDRNFLADLALTQGRHTVKSDVYSLGVAFRNLVQLLGNGNIGPEDRGAVRQDHLELLDKLSQKMIEEEPGNRPTIEEIMKDPLFEGLNFEDIEEGKARPFRYKQNRL.

The signal sequence occupies residues 1 to 26 (MANTSVRRRQLLSSVLLLQWLTTVLG). The tract at residues 39–58 (HGQFPSLRRTEGVSQSGSGH) is disordered. Positions 48-354 (TEGVSQSGSG…IEEIMKDPLF (307 aa)) constitute a Protein kinase domain.

Belongs to the protein kinase superfamily. STE Ser/Thr protein kinase family. WNG subfamily. In terms of assembly, forms a complex composed of BPK1, MCP4, MAG1, GRA8 and GRA9. Interacts with MCP4. Interacts with MAG1. Interacts with GRA8. Interacts with GRA9.

It localises to the secreted. Its function is as follows. Required for the growth, maintenance, and/or stability, and thus infectivity, of bradyzoite cysts. This is Bradyzoite pseudokinase 1 from Toxoplasma gondii.